The sequence spans 278 residues: Aquaporin NIP3-3 (278 aa).

The next 2 membrane-spanning stretches (helical) occupy residues 70-90 (VSAE…TIIM) and 99-119 (TLLG…LSLI). An NPA 1 motif is present at residues 127-129 (NPA). 3 helical membrane passes run 141–163 (PSAH…SFAV), 185–205 (AFFV…ALAT), and 213–233 (LIAV…GPST). The short motif at 238 to 240 (NPA) is the NPA 2 element. The helical transmembrane segment at 255-275 (IWVYLVATPLGAIAGTGAYVA) threads the bilayer.

It belongs to the MIP/aquaporin (TC 1.A.8) family. NIP (TC 1.A.8.12) subfamily. In terms of tissue distribution, expressed in leaves and at lower levels in roots and anthers.

Its subcellular location is the membrane. Its function is as follows. Aquaporins facilitate the transport of water and small neutral solutes across cell membranes. The sequence is that of Aquaporin NIP3-3 (NIP3-3) from Oryza sativa subsp. japonica (Rice).